The following is a 116-amino-acid chain: Ferredoxin-thioredoxin reductase, catalytic chain (116 aa).

[4Fe-4S] cluster is bound at residue Cys57. The active-site Nucleophile is the Cys59. A disulfide bond links Cys59 and Cys89. Residues Cys76, Cys78, and Cys87 each coordinate [4Fe-4S] cluster.

Belongs to the ferredoxin thioredoxin reductase beta subunit family. As to quaternary structure, heterodimer of subunit A (variable subunit) and subunit B (catalytic subunit). Heterodimeric FTR forms a complex with ferredoxin and thioredoxin. [4Fe-4S] cluster serves as cofactor.

Its subcellular location is the plastid. The protein localises to the chloroplast. It carries out the reaction [thioredoxin]-disulfide + 2 reduced [2Fe-2S]-[ferredoxin] + 2 H(+) = [thioredoxin]-dithiol + 2 oxidized [2Fe-2S]-[ferredoxin]. In terms of biological role, catalytic subunit of the ferredoxin-thioredoxin reductase (FTR), which catalyzes the two-electron reduction of thioredoxins by the electrons provided by reduced ferredoxin. This chain is Ferredoxin-thioredoxin reductase, catalytic chain (ftrB), found in Pyropia yezoensis (Susabi-nori).